A 155-amino-acid chain; its full sequence is Small ribosomal subunit protein uS7 (155 aa).

The protein belongs to the universal ribosomal protein uS7 family. In terms of assembly, part of the 30S ribosomal subunit. Contacts proteins S9 and S11.

In terms of biological role, one of the primary rRNA binding proteins, it binds directly to 16S rRNA where it nucleates assembly of the head domain of the 30S subunit. Is located at the subunit interface close to the decoding center, probably blocks exit of the E-site tRNA. The polypeptide is Small ribosomal subunit protein uS7 (Malacoplasma penetrans (strain HF-2) (Mycoplasma penetrans)).